Reading from the N-terminus, the 323-residue chain is Ethanolamine-phosphate cytidylyltransferase (323 aa).

Belongs to the cytidylyltransferase family.

The protein resides in the cytoplasm. It localises to the nucleus. It catalyses the reaction phosphoethanolamine + CTP + H(+) = CDP-ethanolamine + diphosphate. The protein operates within phospholipid metabolism; phosphatidylethanolamine biosynthesis; phosphatidylethanolamine from ethanolamine: step 2/3. Functionally, ethanolamine-phosphate cytidylyltransferase which catalyzes the second step of phosphatidylethanolamine biosynthesis. Involved in the maintenance of plasma membrane and required for proper sporulation. This Saccharomyces cerevisiae (strain ATCC 204508 / S288c) (Baker's yeast) protein is Ethanolamine-phosphate cytidylyltransferase.